Here is a 293-residue protein sequence, read N- to C-terminus: 4-hydroxy-tetrahydrodipicolinate synthase (293 aa).

Thr51 contacts pyruvate. Residue Tyr140 is the Proton donor/acceptor of the active site. Lys168 serves as the catalytic Schiff-base intermediate with substrate. Ile209 provides a ligand contact to pyruvate.

It belongs to the DapA family. In terms of assembly, homotetramer; dimer of dimers.

It is found in the cytoplasm. The catalysed reaction is L-aspartate 4-semialdehyde + pyruvate = (2S,4S)-4-hydroxy-2,3,4,5-tetrahydrodipicolinate + H2O + H(+). It functions in the pathway amino-acid biosynthesis; L-lysine biosynthesis via DAP pathway; (S)-tetrahydrodipicolinate from L-aspartate: step 3/4. Catalyzes the condensation of (S)-aspartate-beta-semialdehyde [(S)-ASA] and pyruvate to 4-hydroxy-tetrahydrodipicolinate (HTPA). The chain is 4-hydroxy-tetrahydrodipicolinate synthase from Streptococcus mutans serotype c (strain ATCC 700610 / UA159).